The sequence spans 426 residues: Trigger factor (426 aa).

A PPIase FKBP-type domain is found at 165 to 239; sequence GDVYKLNEAG…ISEIKRLELP (75 aa).

It belongs to the FKBP-type PPIase family. Tig subfamily.

Its subcellular location is the cytoplasm. The enzyme catalyses [protein]-peptidylproline (omega=180) = [protein]-peptidylproline (omega=0). Functionally, involved in protein export. Acts as a chaperone by maintaining the newly synthesized protein in an open conformation. Functions as a peptidyl-prolyl cis-trans isomerase. In Pelodictyon phaeoclathratiforme (strain DSM 5477 / BU-1), this protein is Trigger factor.